A 383-amino-acid polypeptide reads, in one-letter code: uncharacterized protein (383 aa).

The segment at methionine 1–isoleucine 55 is disordered. Residues proline 13–aspartate 24 show a composition bias toward basic and acidic residues. Positions serine 25 to phenylalanine 44 are enriched in polar residues. A compositionally biased stretch (basic and acidic residues) spans lysine 46–isoleucine 55. Helical transmembrane passes span leucine 87–asparagine 107, asparagine 112–valine 132, phenylalanine 157–valine 177, phenylalanine 179–leucine 199, leucine 205–glutamate 225, valine 228–valine 248, leucine 262–leucine 282, phenylalanine 299–threonine 319, tyrosine 329–glycine 349, and leucine 352–leucine 372.

The protein belongs to the TPT transporter family.

It is found in the membrane. This is an uncharacterized protein from Schizosaccharomyces pombe (strain 972 / ATCC 24843) (Fission yeast).